The sequence spans 1595 residues: Collagen-like protein 2 (1595 aa).

Asn87 and Asn134 each carry an N-linked (GlcNAc...) asparagine; by host glycan. 4 consecutive Collagen-like domains span residues 97–155 (LRGE…NGDV), 175–233 (QVGL…KGEG), 236–295 (GSKG…KGDI), and 299–358 (GIKG…KGMK). Over residues 181–190 (SQGDQGYKGD) the composition is skewed to low complexity. Disordered stretches follow at residues 181–577 (SQGD…SPDL) and 604–1326 (TDIK…GIKG). Basic and acidic residues-rich tracts occupy residues 191–200 (QGSKGDKGQK), 209–448 (KGDK…KGTK), 456–466 (YKGDIGDKGIK), 474–501 (DKGD…DKGY), 510–561 (DNGE…DKGE), 606–615 (IKGEKGDKGE), 622–702 (KGDK…DKGD), 718–825 (KGDK…DKGI), 832–883 (KGDK…KGFK), 895–1041 (KGDK…DKGI), 1048–1098 (KGNK…DQGT), 1107–1151 (KGDK…KGIK), 1159–1250 (NKGD…KGDQ), and 1265–1300 (KGDK…DQGI). N-linked (GlcNAc...) asparagine; by host glycosylation is found at Asn274, Asn280, and Asn286. 4 N-linked (GlcNAc...) asparagine; by host glycosylation sites follow: Asn373, Asn382, Asn400, and Asn409. 5 Collagen-like domains span residues 380–559 (GDNG…KGDK), 608–907 (GEKG…KGEN), 920–1039 (GDKG…KGDK), 1043–1102 (GTNG…KGET), and 1128–1307 (GDQG…SGAS). N-linked (GlcNAc...) asparagine; by host glycans are attached at residues Asn1345, Asn1420, and Asn1545. A disordered region spans residues 1538–1585 (SAFDKGGNGSIRFNPPSSGTKGSGGGGSVQGGGGTIPNDGYPGGNGGP). The span at 1558–1585 (KGSGGGGSVQGGGGTIPNDGYPGGNGGP) shows a compositional bias: gly residues.

Post-translationally, may be hydroxylated on lysine by the viral-encoded procollagen-lysine,2-oxoglutarate 5-dioxygenase.

The protein localises to the virion. May participate in the formation of a layer of cross-linked glycosylated fibrils at the viral surface thus giving it a hairy-like appearance. This is Collagen-like protein 2 from Acanthamoeba polyphaga (Amoeba).